Reading from the N-terminus, the 58-residue chain is Large ribosomal subunit protein bL32 (58 aa).

It belongs to the bacterial ribosomal protein bL32 family.

This chain is Large ribosomal subunit protein bL32, found in Limosilactobacillus fermentum (strain NBRC 3956 / LMG 18251) (Lactobacillus fermentum).